The primary structure comprises 312 residues: Pyridoxal kinase (312 aa).

Residue M1 is modified to N-acetylmethionine. Pyridoxal 5'-phosphate-binding residues include S12 and T47. Pyridoxamine-binding residues include S12 and T47. The residue at position 59 (S59) is a Phosphoserine. D113 is a binding site for K(+). Position 127 (Y127) interacts with pyridoxal 5'-phosphate. T148 is a binding site for K(+). N150 contributes to the ADP binding site. N150 contacts ATP. Phosphoserine is present on S164. T186 contacts K(+). 186-187 is a binding site for ADP; the sequence is TS. 186 to 187 lines the ATP pocket; the sequence is TS. The residue at position 213 (S213) is a Phosphoserine. Residues 223–226 and 233–234 contribute to the ADP site; these read MHKV and TG. ATP contacts are provided by residues 223–226 and 233–234; these read MHKV and TG. 232–235 contributes to the pyridoxal 5'-phosphate binding site; it reads GTGD. D235 serves as a coordination point for pyridoxamine. D235 functions as the Proton acceptor in the catalytic mechanism. Position 285 is a phosphoserine (S285).

It belongs to the pyridoxine kinase family. As to quaternary structure, homodimer. It depends on Zn(2+) as a cofactor. Mg(2+) is required as a cofactor. In terms of tissue distribution, ubiquitous.

The protein resides in the cytoplasm. It localises to the cytosol. It carries out the reaction pyridoxal + ATP = pyridoxal 5'-phosphate + ADP + H(+). It catalyses the reaction pyridoxamine + ATP = pyridoxamine 5'-phosphate + ADP + H(+). The catalysed reaction is pyridoxine + ATP = pyridoxine 5'-phosphate + ADP + H(+). It functions in the pathway cofactor metabolism; pyridoxal 5'-phosphate salvage; pyridoxal 5'-phosphate from pyridoxal: step 1/1. The protein operates within cofactor metabolism; pyridoxal 5'-phosphate salvage; pyridoxine 5'-phosphate from pyridoxine: step 1/1. Its pathway is cofactor metabolism; pyridoxal 5'-phosphate salvage; pyridoxamine 5'-phosphate from pyridoxamine: step 1/1. Its activity is regulated as follows. Activated by K(+). Activity is increased in the presence of Na(+). Its function is as follows. Catalyzes the phosphorylation of the dietary vitamin B6 vitamers pyridoxal (PL), pyridoxine (PN) and pyridoxamine (PM) to form pyridoxal 5'-phosphate (PLP), pyridoxine 5'-phosphate (PNP) and pyridoxamine 5'-phosphate (PMP), respectively. PLP is the active form of vitamin B6, and acts as a cofactor for over 140 different enzymatic reactions. In Ovis aries (Sheep), this protein is Pyridoxal kinase (PDXK).